We begin with the raw amino-acid sequence, 313 residues long: Ornithine carbamoyltransferase (313 aa).

Carbamoyl phosphate contacts are provided by residues 61–64, Gln-88, Arg-112, and 139–142; these read STRT and HPCQ. Residues Asn-170, Asp-228, and 232–233 each bind L-ornithine; that span reads SM. Carbamoyl phosphate contacts are provided by residues 268 to 269 and Arg-296; that span reads CL.

It belongs to the aspartate/ornithine carbamoyltransferase superfamily. OTCase family.

It localises to the cytoplasm. It catalyses the reaction carbamoyl phosphate + L-ornithine = L-citrulline + phosphate + H(+). The protein operates within amino-acid biosynthesis; L-arginine biosynthesis; L-arginine from L-ornithine and carbamoyl phosphate: step 1/3. Functionally, reversibly catalyzes the transfer of the carbamoyl group from carbamoyl phosphate (CP) to the N(epsilon) atom of ornithine (ORN) to produce L-citrulline. The chain is Ornithine carbamoyltransferase from Bordetella avium (strain 197N).